A 544-amino-acid polypeptide reads, in one-letter code: CTP synthase (544 aa).

An amidoligase domain region spans residues 1–266 (MATNYIFVTG…DDFVCDRFRL (266 aa)). Ser14 serves as a coordination point for CTP. Ser14 serves as a coordination point for UTP. Residues 15 to 20 (SLGKGI) and Asp72 each bind ATP. Positions 72 and 140 each coordinate Mg(2+). Residues 147–149 (DIE), 187–192 (KTKPTQ), and Lys223 each bind CTP. UTP is bound by residues 187-192 (KTKPTQ) and Lys223. Position 239–241 (239–241 (KDV)) interacts with ATP. Residues 291–542 (TIGMVGKYVE…VKAAKEHQGK (252 aa)) enclose the Glutamine amidotransferase type-1 domain. Gly352 lines the L-glutamine pocket. The active-site Nucleophile; for glutamine hydrolysis is Cys379. L-glutamine contacts are provided by residues 380-383 (LGMQ), Glu403, and Arg470. Active-site residues include His515 and Glu517.

It belongs to the CTP synthase family. In terms of assembly, homotetramer.

The enzyme catalyses UTP + L-glutamine + ATP + H2O = CTP + L-glutamate + ADP + phosphate + 2 H(+). It carries out the reaction L-glutamine + H2O = L-glutamate + NH4(+). The catalysed reaction is UTP + NH4(+) + ATP = CTP + ADP + phosphate + 2 H(+). Its pathway is pyrimidine metabolism; CTP biosynthesis via de novo pathway; CTP from UDP: step 2/2. Its activity is regulated as follows. Allosterically activated by GTP, when glutamine is the substrate; GTP has no effect on the reaction when ammonia is the substrate. The allosteric effector GTP functions by stabilizing the protein conformation that binds the tetrahedral intermediate(s) formed during glutamine hydrolysis. Inhibited by the product CTP, via allosteric rather than competitive inhibition. Catalyzes the ATP-dependent amination of UTP to CTP with either L-glutamine or ammonia as the source of nitrogen. Regulates intracellular CTP levels through interactions with the four ribonucleotide triphosphates. The sequence is that of CTP synthase from Glaesserella parasuis serovar 5 (strain SH0165) (Haemophilus parasuis).